We begin with the raw amino-acid sequence, 182 residues long: SAGA-associated factor 11 homolog (182 aa).

The disordered stretch occupies residues 61–84 (GSGAAVEGEPEDSKPYTIVDQPDT). The SGF11-type zinc finger occupies 98–119 (CHCPNCNRIVAASRFAPHLEKC). Positions 133–182 (RIANTRDVGTGNYFGGDEDDEDDADWSGEKRKKKISQVRTNGSKKNGKTS) are disordered. The segment covering 148-158 (GDEDDEDDADW) has biased composition (acidic residues).

Belongs to the SGF11 family. Component of some SAGA transcription coactivator-HAT complexes. Within the SAGA complex, participates in a subcomplex of SAGA called the DUB module (deubiquitination module).

Its subcellular location is the nucleus. Component of the transcription regulatory histone acetylation (HAT) complex SAGA, a multiprotein complex that activates transcription by remodeling chromatin and mediating histone acetylation and deubiquitination. Within the SAGA complex, participates in a subcomplex that specifically deubiquitinates histone H2B. The SAGA complex is recruited to specific gene promoters by activators, where it is required for transcription. The protein is SAGA-associated factor 11 homolog of Anopheles gambiae (African malaria mosquito).